The sequence spans 781 residues: ATP-dependent RNA helicase rok1 (781 aa).

Disordered regions lie at residues 7-108 and 134-177; these read LSRG…KPKL and QDEA…IYPQ. The span at 48–57 shows a compositional bias: basic residues; that stretch reads KRGKKRKRKG. The span at 66–75 shows a compositional bias: acidic residues; the sequence is SGDEDDDASD. 2 stretches are compositionally biased toward basic and acidic residues: residues 84–108 and 139–173; these read TPEELAAKKDAELKADEPKKQKPKL and TEEKPPKKQKKQKEDRKKQEEEEKKKKKKDEDKKQ. The Q motif signature appears at 184–212; it reads ELKYTYGIHPVLADNITRQGFRVPTEVQM. In terms of domain architecture, Helicase ATP-binding spans 233–487; the sequence is DVKVEKGIDF…TKHIDKRAKR (255 aa). 246–253 contributes to the ATP binding site; it reads APTGSGKT. Residues 323–386 form a disordered region; sequence ESNEQEETEQ…SRAKGDQKFK (64 aa). Acidic residues predominate over residues 339–369; sequence QDSDSDSEAESEPEEVMKIDEEEEEEEESDS. Positions 370–386 are enriched in basic and acidic residues; that stretch reads DAEKKTESRAKGDQKFK. Residues 434–437 carry the DEAD box motif; it reads DEAD. A Helicase C-terminal domain is found at 527-689; sequence ALRQLLHPVS…GKDIDEKDTV (163 aa). The tract at residues 718–781 is disordered; sequence RGVESRRTGG…KAEEEWTGLD (64 aa). The span at 736–752 shows a compositional bias: basic and acidic residues; it reads SWERRRENNRREAIEAS.

This sequence belongs to the DEAD box helicase family. DDX52/ROK1 subfamily. Interacts with the U3 snoRNA and is associated with the 90S and 40S pre-ribosomes.

Its subcellular location is the nucleus. The protein resides in the nucleolus. It catalyses the reaction ATP + H2O = ADP + phosphate + H(+). Functionally, ATP-dependent RNA helicase involved in 40S ribosomal subunit biogenesis. Required for the processing and cleavage of 35S pre-rRNA at sites A0, A1, and A2, leading to mature 18S rRNA. This is ATP-dependent RNA helicase rok1 (drh-16) from Neurospora crassa (strain ATCC 24698 / 74-OR23-1A / CBS 708.71 / DSM 1257 / FGSC 987).